Here is a 138-residue protein sequence, read N- to C-terminus: Basic phospholipase A2 vurtoxin (138 aa).

The signal sequence occupies residues 1 to 16; that stretch reads MRTLWIVAVCLIGVEG. Cystine bridges form between Cys-42-Cys-131, Cys-44-Cys-60, Cys-59-Cys-111, Cys-65-Cys-138, Cys-66-Cys-104, Cys-73-Cys-97, and Cys-91-Cys-102. Tyr-43, Gly-45, and Gly-47 together coordinate Ca(2+). His-63 is an active-site residue. Asp-64 contributes to the Ca(2+) binding site. Residue Asp-105 is part of the active site.

Ca(2+) serves as cofactor. As to expression, expressed by the venom gland.

The protein localises to the secreted. The enzyme catalyses a 1,2-diacyl-sn-glycero-3-phosphocholine + H2O = a 1-acyl-sn-glycero-3-phosphocholine + a fatty acid + H(+). Snake venom phospholipase A2 that may have a strong anticoagulant activity. Is able to suppress the acetylcholine (ACh)-evoked current mediated by alpha-7 (CHRNA7)-similar nAChRs in L.stagnalis neurons (IC(50)=10.5 uM) and to compete with alpha-bungarotoxin for binding to muscle- and alpha-7 neuronal nAChR types, as well as to AChBPs. In inhibition of alpha-bungarotoxin binding, this toxin is mostly active against T.californica nAChR (IC(50)=0.26 uM), it is moderately active against human alpha-7 nAChR (IC(50)=14 uM), and is not active against L.stagnalis and A.californica AChBP (IC(50)&gt;30 uM). In Vipera renardi (Steppe viper), this protein is Basic phospholipase A2 vurtoxin.